A 473-amino-acid polypeptide reads, in one-letter code: Sensor histidine kinase GtrS (473 aa).

Over 1–8 (MPRSLLGR) the chain is Cytoplasmic. Residues 9–29 (MLLLTLLAVLVAQGLSSLFWL) traverse the membrane as a helical segment. Residues 30–197 (SHLRSSQREG…LEPEGLQPQQ (168 aa)) are Periplasmic-facing. The chain crosses the membrane as a helical span at residues 198 to 218 (VLSIVFTSLLLLLFTGLLMHW). An HAMP domain is found at 217-269 (HWQSRPLKRLARAARDLALGSPSAALEERGASELVEVARAFNTMHERIDRYLN). At 219 to 473 (QSRPLKRLAR…SLRLPRLGLE (255 aa)) the chain is on the cytoplasmic side. The region spanning 277 to 471 (AISHDLRTPI…RVSLRLPRLG (195 aa)) is the Histidine kinase domain. His280 carries the post-translational modification Phosphohistidine; by autocatalysis.

Autophosphorylated.

It localises to the cell inner membrane. It carries out the reaction ATP + protein L-histidine = ADP + protein N-phospho-L-histidine.. Member of the two-component regulatory system GtrS/GltR involved in the regulation of glucose metabolism and transport, as well as regulation of the exotoxin A gene expression. GtrS recognizes and binds 2-ketogluconate and 6-phosphogluconate via its sensor domain, which accelerates GtrS autophosphorylation and concomitant transphosphorylation and regulation of the response regulator GltR. Functionally, plays a key role during bacteria-host interactions and is required for optimal colonization and dissemination in a mouse model of infection. Contributes to modulation of the type III secretion system (T3SS) in response to host cells via the regulation of the OprB transport system. The protein is Sensor histidine kinase GtrS of Pseudomonas aeruginosa (strain ATCC 15692 / DSM 22644 / CIP 104116 / JCM 14847 / LMG 12228 / 1C / PRS 101 / PAO1).